A 383-amino-acid polypeptide reads, in one-letter code: L-aspartate/L-glutamate decarboxylase (383 aa).

K232 bears the N6-(pyridoxal phosphate)lysine mark.

Belongs to the group II decarboxylase family. MfnA subfamily. In terms of assembly, monomer. Pyridoxal 5'-phosphate serves as cofactor.

It carries out the reaction L-aspartate + H(+) = beta-alanine + CO2. The catalysed reaction is L-glutamate + H(+) = 4-aminobutanoate + CO2. The enzyme catalyses L-cysteate + H(+) = taurine + CO2. It catalyses the reaction 3-sulfino-L-alanine + H(+) = hypotaurine + CO2. The protein operates within cofactor biosynthesis; coenzyme A biosynthesis. Catalyzes the decarboxylation of L-aspartate to produce beta-alanine, and the decarboxylation of L-glutamate to produce 4-aminobutanoate. Can also use cysteate and, to a lesser extent, cysteine sulfite (3-sulfino-L-alanine), but not L-tyrosine. Specific activities toward L-aspartate and cysteate are higher than toward L-glutamate. The polypeptide is L-aspartate/L-glutamate decarboxylase (Pyrococcus horikoshii (strain ATCC 700860 / DSM 12428 / JCM 9974 / NBRC 100139 / OT-3)).